We begin with the raw amino-acid sequence, 290 residues long: Aquaporin PIP2-1 (290 aa).

Residues 1–20 are disordered; that stretch reads MGKDDVIESGAGGGEFAAKD. 2 helical membrane-spanning segments follow: residues 43 to 63 and 80 to 100; these read AVIA…ATVI and CGGV…FVLV. Residues 112–114 carry the NPA 1 motif; the sequence is NPA. 3 consecutive transmembrane segments (helical) span residues 131–151, 173–193, and 205–225; these read LLYI…VKAF, GTGL…VFSA, and VPVL…LATI. An NPA 2 motif is present at residues 233–235; sequence NPA. A helical transmembrane segment spans residues 255–275; that stretch reads IFWVGPLVGAAIAAFYHQYIL.

This sequence belongs to the MIP/aquaporin (TC 1.A.8) family. PIP (TC 1.A.8.11) subfamily. Homomers. Can interact with PIP1-2 to form heteromers. In terms of tissue distribution, expressed in roots.

The protein localises to the cell membrane. Water channel required to facilitate the transport of water across cell membrane. Active as homomers. Increased activity when heteromerization with PIP1-2. The protein is Aquaporin PIP2-1 (PIP2-1) of Zea mays (Maize).